A 528-amino-acid polypeptide reads, in one-letter code: GMP synthase [glutamine-hydrolyzing] (528 aa).

The 192-residue stretch at 13-204 folds into the Glutamine amidotransferase type-1 domain; it reads AIVILDFGSQ…VYHVCGCDPD (192 aa). Cysteine 90 acts as the Nucleophile in catalysis. Residues histidine 178 and glutamate 180 contribute to the active site. A GMPS ATP-PPase domain is found at 205 to 403; it reads WTTAAFIDEA…LGLPEEIVRR (199 aa). ATP is bound at residue 232-238; sequence SGGVDSS.

Homodimer.

The catalysed reaction is XMP + L-glutamine + ATP + H2O = GMP + L-glutamate + AMP + diphosphate + 2 H(+). The protein operates within purine metabolism; GMP biosynthesis; GMP from XMP (L-Gln route): step 1/1. Functionally, catalyzes the synthesis of GMP from XMP. The polypeptide is GMP synthase [glutamine-hydrolyzing] (Synechococcus sp. (strain CC9605)).